The primary structure comprises 197 residues: 3-isopropylmalate dehydratase small subunit (197 aa).

Belongs to the LeuD family. LeuD type 1 subfamily. In terms of assembly, heterodimer of LeuC and LeuD.

It catalyses the reaction (2R,3S)-3-isopropylmalate = (2S)-2-isopropylmalate. Its pathway is amino-acid biosynthesis; L-leucine biosynthesis; L-leucine from 3-methyl-2-oxobutanoate: step 2/4. Catalyzes the isomerization between 2-isopropylmalate and 3-isopropylmalate, via the formation of 2-isopropylmaleate. This is 3-isopropylmalate dehydratase small subunit from Azobacteroides pseudotrichonymphae genomovar. CFP2.